Reading from the N-terminus, the 438-residue chain is Probable tRNA pseudouridine synthase D (438 aa).

Catalysis depends on Asp-86, which acts as the Nucleophile. The TRUD domain occupies 165-390 (GVPNFFGIQR…SKGTRREVLL (226 aa)).

Belongs to the pseudouridine synthase TruD family.

The catalysed reaction is uridine(13) in tRNA = pseudouridine(13) in tRNA. Could be responsible for synthesis of pseudouridine from uracil-13 in transfer RNAs. This Methanosarcina mazei (strain ATCC BAA-159 / DSM 3647 / Goe1 / Go1 / JCM 11833 / OCM 88) (Methanosarcina frisia) protein is Probable tRNA pseudouridine synthase D.